The primary structure comprises 1453 residues: ABC transporter G family member 34 (1453 aa).

Positions 1–24 (MLGRDEDLVRTMSGRGSLGSTSHR) are disordered. In terms of domain architecture, ABC transporter 1 spans 173-446 (LGLFHLLPSK…FEYMGFKCPE (274 aa)). ATP is bound at residue 206 to 213 (GPPSSGKT). Positions 524 to 737 (DLFKACFDRE…GQTALVINEF (214 aa)) constitute an ABC transmembrane type-2 1 domain. The next 6 membrane-spanning stretches (helical) occupy residues 542-562 (FVYVFKTVQITIMSLIAMTVY), 582-602 (LFFSLINLMFNGMAELAFTVM), 621-641 (FALPGFLLKIPLSLIESVIWI), 661-681 (LLAYFCVNQMALSLFRFLGAL), 687-707 (IANSGGTLALLVVFVLGGFII), and 773-793 (FWICIGALLGFTVLFNFCYII). In terms of domain architecture, ABC transporter 2 spans 852–1105 (LAFNNVNYYV…LVEYFEAIEG (254 aa)). 897-904 (GVSGAGKT) contacts ATP. An ABC transmembrane type-2 2 domain is found at 1177–1391 (TQTKACFWKM…TLYGIITSQV (215 aa)). The next 7 helical transmembrane spans lie at 1196–1216 (YNAIRFLMTVVIGVLFGLLFW), 1230–1250 (NFFGAMYAAVLFLGATNAATV), 1289–1309 (IQTGVYTLILYSMIGYDWTVV), 1311–1331 (FFWFYYYMLTCFVYFTLYGMM), 1341–1361 (IAGICLSFFLSFWNLFSGFLI), 1366–1386 (IPIWWRWYYWASPVAWTLYGI), and 1422–1442 (FLPVVAVVHIAWILIFLFAFA).

The protein belongs to the ABC transporter superfamily. ABCG family. PDR (TC 3.A.1.205) subfamily. Expressed in roots at low levels.

The protein resides in the membrane. May be a general defense protein. This Arabidopsis thaliana (Mouse-ear cress) protein is ABC transporter G family member 34 (ABCG34).